The primary structure comprises 227 residues: Urease accessory protein UreF (227 aa).

This sequence belongs to the UreF family. As to quaternary structure, ureD, UreF and UreG form a complex that acts as a GTP-hydrolysis-dependent molecular chaperone, activating the urease apoprotein by helping to assemble the nickel containing metallocenter of UreC. The UreE protein probably delivers the nickel.

The protein resides in the cytoplasm. In terms of biological role, required for maturation of urease via the functional incorporation of the urease nickel metallocenter. The sequence is that of Urease accessory protein UreF from Shewanella halifaxensis (strain HAW-EB4).